A 306-amino-acid polypeptide reads, in one-letter code: tRNA dimethylallyltransferase 1 (306 aa).

13-20 contacts ATP; it reads GPTASGKT. Residue 15–20 participates in substrate binding; the sequence is TASGKT. An interaction with substrate tRNA region spans residues 38 to 41; it reads DSRQ.

Belongs to the IPP transferase family. As to quaternary structure, monomer. The cofactor is Mg(2+).

The catalysed reaction is adenosine(37) in tRNA + dimethylallyl diphosphate = N(6)-dimethylallyladenosine(37) in tRNA + diphosphate. In terms of biological role, catalyzes the transfer of a dimethylallyl group onto the adenine at position 37 in tRNAs that read codons beginning with uridine, leading to the formation of N6-(dimethylallyl)adenosine (i(6)A). The chain is tRNA dimethylallyltransferase 1 from Azobacteroides pseudotrichonymphae genomovar. CFP2.